The following is a 244-amino-acid chain: Cysteine-rich secretory protein 2 (244 aa).

The first 21 residues, 1–21 (MALLPVVVFLITMLLPCVLTN), serve as a signal peptide directing secretion. The 128-residue stretch at 43 to 170 (NKHNQLRKSV…SLKYYYVCQY (128 aa)) folds into the SCP domain. Disulfide bonds link cysteine 190–cysteine 197, cysteine 193–cysteine 202, cysteine 206–cysteine 239, cysteine 215–cysteine 233, and cysteine 224–cysteine 237. The 34-residue stretch at 206–239 (CEYEDLLSNCESLKNTAGCEHQLLVEKCKATCRC) folds into the ShKT domain.

Belongs to the CRISP family. Interacts with NSUN4 isoform 3. In terms of tissue distribution, testis.

It is found in the secreted. Functionally, may regulate some ion channels' activity and thereby regulate calcium fluxes during sperm capacitation. In Cavia porcellus (Guinea pig), this protein is Cysteine-rich secretory protein 2 (CRISP2).